Here is a 66-residue protein sequence, read N- to C-terminus: Beta-toxin Chui2 (66 aa).

Residues 1-66 enclose the LCN-type CS-alpha/beta domain; the sequence is KEGYIVNSYT…VWPLKNKTCN (66 aa). 4 disulfides stabilise this stretch: cysteine 12–cysteine 65, cysteine 16–cysteine 41, cysteine 25–cysteine 46, and cysteine 29–cysteine 48. Position 66 is an asparagine amide (asparagine 66).

It belongs to the long (4 C-C) scorpion toxin superfamily. Sodium channel inhibitor family. Beta subfamily. As to expression, expressed by the venom gland.

The protein resides in the secreted. In terms of biological role, beta toxins bind voltage-independently at site-4 of sodium channels (Nav) and shift the voltage of activation toward more negative potentials thereby affecting sodium channel activation and promoting spontaneous and repetitive firing. The protein is Beta-toxin Chui2 of Centruroides huichol (Scorpion).